The sequence spans 345 residues: MPLFGSKKETAKKSSKKDKDEGKMPAVEDKYILKDLLGTGAFSQVRLAEVKEDPSRVVAIKIIDKKALKGKEDSLENEIRVLRRLQHPNIVQLMETYEDREHVYLIIELVTGGELFDRIVEKGSYTEKDASDLIRQVLEAVDYMHDQGVVHRDLKPENLLYYSPDEDSKIMISDFGLSKMEDSGIMATACGTPGYVAPEVLAQKPYGKAVDVWSIGVIAYILLCGYPPFYDENDANLFAQILKGEFEFDSPYWDEISESAKDFIRQLMCVDVEKRYTCKQALGHPWISGNAASTENIHSSVSEQLKKNFAKSRWRQAYHATAVIRQMRLFATKQVIVRRKLSESQ.

Positions 1–23 (MPLFGSKKETAKKSSKKDKDEGK) are disordered. The Protein kinase domain occupies 31-287 (YILKDLLGTG…CKQALGHPWI (257 aa)). Residues 37–45 (LGTGAFSQV) and Lys-61 each bind ATP. Asp-153 acts as the Proton acceptor in catalysis. Residues 287–327 (ISGNAASTENIHSSVSEQLKKNFAKSRWRQAYHATAVIRQM) are autoinhibitory domain. Positions 307–328 (KNFAKSRWRQAYHATAVIRQMR) are calmodulin-binding.

The protein belongs to the protein kinase superfamily. CAMK Ser/Thr protein kinase family. CaMK subfamily. Highly expressed in hepatopancreas and to a lesser extent in gills. Low expression in hemocytes, testis, ovary, heart, eyestalk, muscle and epidermis.

The catalysed reaction is L-seryl-[protein] + ATP = O-phospho-L-seryl-[protein] + ADP + H(+). It carries out the reaction L-threonyl-[protein] + ATP = O-phospho-L-threonyl-[protein] + ADP + H(+). With respect to regulation, activated by Ca(2+)/calmodulin. Binding of calmodulin results in conformational change that relieves intrasteric autoinhibition. Calcium/calmodulin-dependent protein kinase that operates in the calcium-triggered CaMKK-CaMK1 signaling cascade and, upon calcium influx, regulates transcription activators activity, cell cycle, hormone production, cell differentiation, actin filament organization and neurite outgrowth. Involved in molting. The chain is Calcium/calmodulin-dependent protein kinase type 1 from Macrobrachium nipponense (Oriental river shrimp).